Consider the following 321-residue polypeptide: Lipoyl synthase (321 aa).

Residues Cys68, Cys73, Cys79, Cys94, Cys98, Cys101, and Ser308 each contribute to the [4Fe-4S] cluster site. The Radical SAM core domain maps to 80 to 297; that stretch reads FNHGTATFMI…KAEAMAMGFT (218 aa).

Belongs to the radical SAM superfamily. Lipoyl synthase family. It depends on [4Fe-4S] cluster as a cofactor.

It is found in the cytoplasm. It carries out the reaction [[Fe-S] cluster scaffold protein carrying a second [4Fe-4S](2+) cluster] + N(6)-octanoyl-L-lysyl-[protein] + 2 oxidized [2Fe-2S]-[ferredoxin] + 2 S-adenosyl-L-methionine + 4 H(+) = [[Fe-S] cluster scaffold protein] + N(6)-[(R)-dihydrolipoyl]-L-lysyl-[protein] + 4 Fe(3+) + 2 hydrogen sulfide + 2 5'-deoxyadenosine + 2 L-methionine + 2 reduced [2Fe-2S]-[ferredoxin]. Its pathway is protein modification; protein lipoylation via endogenous pathway; protein N(6)-(lipoyl)lysine from octanoyl-[acyl-carrier-protein]: step 2/2. In terms of biological role, catalyzes the radical-mediated insertion of two sulfur atoms into the C-6 and C-8 positions of the octanoyl moiety bound to the lipoyl domains of lipoate-dependent enzymes, thereby converting the octanoylated domains into lipoylated derivatives. This chain is Lipoyl synthase, found in Klebsiella pneumoniae (strain 342).